Here is a 483-residue protein sequence, read N- to C-terminus: Cobyric acid synthase (483 aa).

Residues 248-435 enclose the GATase cobBQ-type domain; the sequence is LLKVVVPVLP…LHGLFETPAA (188 aa). Residue Cys329 is the Nucleophile of the active site. His427 is a catalytic residue.

It belongs to the CobB/CobQ family. CobQ subfamily.

The protein operates within cofactor biosynthesis; adenosylcobalamin biosynthesis. Catalyzes amidations at positions B, D, E, and G on adenosylcobyrinic A,C-diamide. NH(2) groups are provided by glutamine, and one molecule of ATP is hydrogenolyzed for each amidation. In Pseudomonas fluorescens (strain ATCC BAA-477 / NRRL B-23932 / Pf-5), this protein is Cobyric acid synthase.